Consider the following 201-residue polypeptide: Adenylyl-sulfate kinase (201 aa).

The tract at residues 1-23 (MALHDENVVWHSHPVTPQQREQH) is disordered. Residue 35 to 42 (GLSGSGKS) coordinates ATP. The active-site Phosphoserine intermediate is Ser109.

This sequence belongs to the APS kinase family.

The enzyme catalyses adenosine 5'-phosphosulfate + ATP = 3'-phosphoadenylyl sulfate + ADP + H(+). It functions in the pathway sulfur metabolism; hydrogen sulfide biosynthesis; sulfite from sulfate: step 2/3. Its function is as follows. Catalyzes the synthesis of activated sulfate. The polypeptide is Adenylyl-sulfate kinase (Escherichia coli O6:K15:H31 (strain 536 / UPEC)).